The primary structure comprises 109 residues: Probable endoribonuclease MazF5 (109 aa).

It belongs to the PemK/MazF family. As to quaternary structure, forms a complex with cognate antitoxin MazE5.

Toxic component of a type II toxin-antitoxin (TA) system. Upon expression in M.smegmatis inhibits colony formation. Its toxic effect is neutralized by coexpression with cognate antitoxin MazE5. Probably an endoribonuclease. The chain is Probable endoribonuclease MazF5 (mazF5) from Mycobacterium tuberculosis (strain ATCC 25618 / H37Rv).